Reading from the N-terminus, the 1071-residue chain is DNA-directed RNA polymerase subunit beta (1071 aa).

This sequence belongs to the RNA polymerase beta chain family. In terms of assembly, in plastids the minimal PEP RNA polymerase catalytic core is composed of four subunits: alpha, beta, beta', and beta''. When a (nuclear-encoded) sigma factor is associated with the core the holoenzyme is formed, which can initiate transcription.

It is found in the plastid. The protein resides in the chloroplast. It catalyses the reaction RNA(n) + a ribonucleoside 5'-triphosphate = RNA(n+1) + diphosphate. Its function is as follows. DNA-dependent RNA polymerase catalyzes the transcription of DNA into RNA using the four ribonucleoside triphosphates as substrates. In Anthoceros angustus (Hornwort), this protein is DNA-directed RNA polymerase subunit beta.